Reading from the N-terminus, the 433-residue chain is MAAAFSSTVGAPASTPTRSSFLGKKLNKPQVSAAVTYHGKSSSSNSRFKAMAAKEVDETKQTDEDRWKGLAYDISDDQQDITRGKGLVDNLFQAPMGDGTHVAVLSSYDYISQGQKSYNFDNMMDGFYIAKGFMDKLVVHLSKNFMTLPNIKVPLILGIWGGKGQGKSFQCELVFAKMGITPIMMSAGELESGNAGEPAKLIRQRYREASDLIKKGKMSCLFINDLDAGAGRMGGTTQYTVNNQMVNATLMNIADNPTNVQLPGMYNKEDNPRVPIIVTGNDFSTLYAPLIRDGRMEKFYWAPTREDRIGVCKGIFRTDGVDEEHVVQLVDTFPGQSIDFFGALRARVYDDEVRRWVSETGVENIARKLVNSKEGPPTFEQPKITIEKLLEYGHMLVAEQENVKRVQLADKYLNEAALGEANEDAMKTGSFFK.

A compositionally biased stretch (polar residues) spans 1–20 (MAAAFSSTVGAPASTPTRSS). The N-terminal 53 residues, 1–53 (MAAAFSSTVGAPASTPTRSSFLGKKLNKPQVSAAVTYHGKSSSSNSRFKAMAA), are a transit peptide targeting the chloroplast. Positions 1–60 (MAAAFSSTVGAPASTPTRSSFLGKKLNKPQVSAAVTYHGKSSSSNSRFKAMAAKEVDETK) are disordered. 161–168 (GGKGQGKS) provides a ligand contact to ATP.

It belongs to the RuBisCO activase family.

It is found in the plastid. The protein resides in the chloroplast stroma. In terms of biological role, activation of RuBisCO (ribulose-1,5-bisphosphate carboxylase/oxygenase; EC 4.1.1.39) involves the ATP-dependent carboxylation of the epsilon-amino group of lysine leading to a carbamate structure. The sequence is that of Ribulose bisphosphate carboxylase/oxygenase activase, chloroplastic (RCA1) from Zea mays (Maize).